Reading from the N-terminus, the 234-residue chain is BTB/POZ domain-containing protein KCTD5 (234 aa).

Ala-2 carries the post-translational modification N-acetylalanine. One can recognise a BTB domain in the interval 44-146 (KWVRLNVGGT…LVKDKIRERD (103 aa)). Residues 211 to 234 (NSPHGPASEPSEKAKILQERGSRM) form a disordered region. Residues 220 to 234 (PSEKAKILQERGSRM) are compositionally biased toward basic and acidic residues.

Homopentamer. Interacts (via C-terminus) with GRASP55/GORASP2. Interacts with CUL3 and with ubiquitinated proteins. Interacts with CRY1.

It is found in the cytoplasm. The protein localises to the cytosol. It localises to the nucleus. Its function is as follows. Its interaction with CUL3 suggests that it may act as a substrate adapter in some E3 ligase complex. Does not affect the function of Kv channel Kv2.1/KCNB1, Kv1.2/KCNA2, Kv4.2/KCND2 and Kv3.4/KCNC4. In Bos taurus (Bovine), this protein is BTB/POZ domain-containing protein KCTD5 (KCTD5).